Consider the following 164-residue polypeptide: Disulfide bond formation protein B (164 aa).

Residues 1–4 (MRII) lie on the Cytoplasmic side of the membrane. Residues 5–21 (FLLIALICAGLVSYALY) form a helical membrane-spanning segment. Residues 22–39 (LQLADGLLPCPLCIFQRM) are Periplasmic-facing. Cysteines 31 and 34 form a disulfide. Residues 40–56 (AYWLVGITALFAFIHHP) traverse the membrane as a helical segment. At 57–62 (QRLGRR) the chain is on the cytoplasmic side. A helical transmembrane segment spans residues 63–80 (IYCGLIILFSLAGAIVAG). Topologically, residues 81-136 (RQAWLVRFPEAFECGISPEEAFLNELPLARWWPDMFEANGDCTDGTWQFLSLTIPD) are periplasmic. Cys-94 and Cys-122 are oxidised to a cystine. The chain crosses the membrane as a helical span at residues 137-155 (WSLLIFLAFSLIAGLLWRS). Topologically, residues 156-164 (RSISSSNLK) are cytoplasmic.

This sequence belongs to the DsbB family.

The protein localises to the cell inner membrane. Functionally, required for disulfide bond formation in some periplasmic proteins. Acts by oxidizing the DsbA protein. This chain is Disulfide bond formation protein B, found in Nitrosomonas europaea (strain ATCC 19718 / CIP 103999 / KCTC 2705 / NBRC 14298).